A 216-amino-acid chain; its full sequence is Transmembrane protein 139 (216 aa).

Positions 1-25 (MVPMHLLGRLEKPLLLLCCASFLLG) are cleaved as a signal peptide. Over 26 to 34 (LALLGIKTD) the chain is Extracellular. Residues 35-55 (ITPVAYFFLTLGGFFLFAYLL) traverse the membrane as a helical segment. At 56–216 (VRFLEWGLRS…VFYEDNWAPP (161 aa)) the chain is on the cytoplasmic side. The segment at 104-163 (RPQELDQPPPYSTVVIPPAPEEEQPSHPEGSRRAKLEQRRMASEGSMAQEGSPGRAPINL) is disordered. Positions 127–145 (QPSHPEGSRRAKLEQRRMA) are enriched in basic and acidic residues. Serine 146 and serine 155 each carry phosphoserine.

Interacts with isoform 2 of SLC4A1.

It is found in the membrane. In terms of biological role, may be involved in cellular trafficking of proteins such as SLC4A1. This chain is Transmembrane protein 139 (TMEM139), found in Homo sapiens (Human).